Reading from the N-terminus, the 536-residue chain is Beta-hexosaminidase subunit beta (536 aa).

The signal sequence occupies residues 1 to 31 (MPQSPRSAPGLLLLQALVSLVSLALVAPARL). The N-linked (GlcNAc...) asparagine glycan is linked to N63. Cysteines 70 and 116 form a disulfide. 2 N-linked (GlcNAc...) asparagine glycosylation sites follow: N169 and N306. 2 disulfides stabilise this stretch: C288/C339 and C513/C530. Residue E334 is the Proton donor of the active site.

This sequence belongs to the glycosyl hydrolase 20 family. In terms of assembly, there are 3 forms of beta-hexosaminidase: hexosaminidase A is a heterodimer composed of one subunit alpha and one subunit beta (chain A and B); hexosaminidase B is a homodimer of two beta subunits (two chains A and B); hexosaminidase S is a homodimer of two alpha subunits. The composition of the dimer (isozyme A versus isozyme S) has a significant effect on the substrate specificity of the alpha subunit active site.

It is found in the lysosome. The protein localises to the cytoplasmic vesicle. Its subcellular location is the secretory vesicle. It localises to the cortical granule. The enzyme catalyses Hydrolysis of terminal non-reducing N-acetyl-D-hexosamine residues in N-acetyl-beta-D-hexosaminides.. The catalysed reaction is N-acetyl-beta-D-galactosaminyl-(1-&gt;4)-beta-D-3-sulfogalactosyl-(1-&gt;4)-beta-D-glucosyl-(1&lt;-&gt;1')-ceramide + H2O = a beta-D-3-sulfogalactosyl-(1-&gt;4)-beta-D-glucosyl-(1&lt;-&gt;1')-ceramide + N-acetyl-beta-D-galactosamine. It catalyses the reaction a ganglioside GM2 (d18:1(4E)) + H2O = a ganglioside GM3 (d18:1(4E)) + N-acetyl-beta-D-galactosamine. It carries out the reaction a ganglioside GM2 + H2O = a ganglioside GM3 + N-acetyl-beta-D-galactosamine. The enzyme catalyses beta-D-GalNAc-(1-&gt;4)-alpha-L-IdoA-(1-&gt;3)-beta-D-GalNAc-4-sulfate-(1-&gt;4)-alpha-L-IdoA-(1-&gt;3)-D-GalNAc-4-sulfate + H2O = alpha-L-IdoA-(1-&gt;3)-beta-D-GalNAc-4-sulfate-(1-&gt;4)-alpha-L-IdoA-(1-&gt;3)-D-GalNAc-4-sulfate + N-acetyl-D-galactosamine. The catalysed reaction is N-acetyl-beta-D-6-sulfogalactosaminyl-(1-&gt;4)-alpha-L-iduronyl-(1-&gt;3)-N-acetyl-D-6-sulfogalactosamine + H2O = alpha-L-iduronyl-(1-&gt;3)-N-acetyl-D-6-sulfogalactosamine + N-acetyl-D-6-sulfogalactosamine. With respect to regulation, addition of GM2A stimulates the hydrolysis of sulfated glycosphingolipid SM2 and the ganglioside GM2. Functionally, hydrolyzes the non-reducing end N-acetyl-D-hexosamine and/or sulfated N-acetyl-D-hexosamine of glycoconjugates, such as the oligosaccharide moieties from proteins and neutral glycolipids, or from certain mucopolysaccharides. The isozyme B does not hydrolyze each of these substrates, however hydrolyzes efficiently neutral oligosaccharide. Only the isozyme A is responsible for the degradation of GM2 gangliosides in the presence of GM2A. During fertilization is responsible, at least in part, for the zona block to polyspermy. Present in the cortical granules of non-activated oocytes, is exocytosed during the cortical reaction in response to oocyte activation and inactivates the sperm galactosyltransferase-binding site, accounting for the block in sperm binding to the zona pellucida. The protein is Beta-hexosaminidase subunit beta of Mus musculus (Mouse).